A 342-amino-acid chain; its full sequence is HPr kinase/phosphorylase (342 aa).

Active-site residues include His-153 and Lys-174. 168–175 (GKSGLGKS) contacts ATP. Ser-175 provides a ligand contact to Mg(2+). Asp-192 (proton acceptor; for phosphorylation activity. Proton donor; for dephosphorylation activity) is an active-site residue. An important for the catalytic mechanism of both phosphorylation and dephosphorylation region spans residues 217-226 (MEIRGLGVVD). Glu-218 contacts Mg(2+). Arg-259 is a catalytic residue. The interval 280-285 (PIFPGK) is important for the catalytic mechanism of dephosphorylation.

Belongs to the HPrK/P family. In terms of assembly, homohexamer. Mg(2+) is required as a cofactor.

It catalyses the reaction [HPr protein]-L-serine + ATP = [HPr protein]-O-phospho-L-serine + ADP + H(+). The catalysed reaction is [HPr protein]-O-phospho-L-serine + phosphate + H(+) = [HPr protein]-L-serine + diphosphate. Its function is as follows. Catalyzes the ATP- as well as the pyrophosphate-dependent phosphorylation of a specific serine residue in HPr, a phosphocarrier protein of the phosphoenolpyruvate-dependent sugar phosphotransferase system (PTS). HprK/P also catalyzes the pyrophosphate-producing, inorganic phosphate-dependent dephosphorylation (phosphorolysis) of seryl-phosphorylated HPr (P-Ser-HPr). In Chlorobaculum tepidum (strain ATCC 49652 / DSM 12025 / NBRC 103806 / TLS) (Chlorobium tepidum), this protein is HPr kinase/phosphorylase.